A 353-amino-acid chain; its full sequence is MTAILERRESTSLWGRFCNWITSTENRLYIGWFGVLMIPTLLTATSVFIIAFIAAPPVDIDGIREPVSGSLLYGNNIISGAIIPTSAAIGLHFYPIWEAASVDEWLYNGGPYELIVLHFLLGVACYMGREWELSFRLGMRPWIAVAYSAPVAAATAVFLIYPIGQGSFSDGMPLGISGTFNFMIVFQAEHNILMHPFHMLGVAGVFGGSLFSAMHGSLVTSSLIRETTENESANAGYRFGQEEETYNIVAAHGYFGRLIFQYASFNNSRSLHFFLAAWPVVGIWFTALGISTMAFNLNGFNFNQSVVDSQGRVINTWADIINRANLGMEVMHERNAHNFPLDLAAVEVPSTNG.

Threonine 2 is modified (N-acetylthreonine). Threonine 2 carries the phosphothreonine modification. Transmembrane regions (helical) follow at residues 29–46 (YIGW…TATS), 118–133 (HFLL…EWEL), and 142–156 (WIAV…AATA). Histidine 118 lines the chlorophyll a pocket. Tyrosine 126 provides a ligand contact to pheophytin a. Positions 170 and 189 each coordinate [CaMn4O5] cluster. The helical transmembrane segment at 197–218 (FHMLGVAGVFGGSLFSAMHGSL) threads the bilayer. Histidine 198 contributes to the chlorophyll a binding site. Residues histidine 215 and 264–265 (SF) each bind a quinone. Histidine 215 contacts Fe cation. Residue histidine 272 participates in Fe cation binding. A helical transmembrane segment spans residues 274–288 (FLAAWPVVGIWFTAL). 4 residues coordinate [CaMn4O5] cluster: histidine 332, glutamate 333, aspartate 342, and alanine 344. A propeptide spanning residues 345–353 (AVEVPSTNG) is cleaved from the precursor.

The protein belongs to the reaction center PufL/M/PsbA/D family. In terms of assembly, PSII is composed of 1 copy each of membrane proteins PsbA, PsbB, PsbC, PsbD, PsbE, PsbF, PsbH, PsbI, PsbJ, PsbK, PsbL, PsbM, PsbT, PsbX, PsbY, PsbZ, Psb30/Ycf12, at least 3 peripheral proteins of the oxygen-evolving complex and a large number of cofactors. It forms dimeric complexes. The D1/D2 heterodimer binds P680, chlorophylls that are the primary electron donor of PSII, and subsequent electron acceptors. It shares a non-heme iron and each subunit binds pheophytin, quinone, additional chlorophylls, carotenoids and lipids. D1 provides most of the ligands for the Mn4-Ca-O5 cluster of the oxygen-evolving complex (OEC). There is also a Cl(-1) ion associated with D1 and D2, which is required for oxygen evolution. The PSII complex binds additional chlorophylls, carotenoids and specific lipids. serves as cofactor. In terms of processing, tyr-161 forms a radical intermediate that is referred to as redox-active TyrZ, YZ or Y-Z. C-terminally processed by CTPA; processing is essential to allow assembly of the oxygen-evolving complex and thus photosynthetic growth.

It is found in the plastid. Its subcellular location is the chloroplast thylakoid membrane. It carries out the reaction 2 a plastoquinone + 4 hnu + 2 H2O = 2 a plastoquinol + O2. Its function is as follows. Photosystem II (PSII) is a light-driven water:plastoquinone oxidoreductase that uses light energy to abstract electrons from H(2)O, generating O(2) and a proton gradient subsequently used for ATP formation. It consists of a core antenna complex that captures photons, and an electron transfer chain that converts photonic excitation into a charge separation. The D1/D2 (PsbA/PsbD) reaction center heterodimer binds P680, the primary electron donor of PSII as well as several subsequent electron acceptors. This chain is Photosystem II protein D1, found in Calycanthus floridus var. glaucus (Eastern sweetshrub).